A 231-amino-acid polypeptide reads, in one-letter code: Flagellar L-ring protein (231 aa).

Residues 1–18 form the signal peptide; the sequence is MKRFVSVVALSGVVSLAG. Cys-19 is lipidated: N-palmitoyl cysteine. Residue Cys-19 is the site of S-diacylglycerol cysteine attachment.

This sequence belongs to the FlgH family. The basal body constitutes a major portion of the flagellar organelle and consists of four rings (L,P,S, and M) mounted on a central rod.

It localises to the cell outer membrane. The protein localises to the bacterial flagellum basal body. In terms of biological role, assembles around the rod to form the L-ring and probably protects the motor/basal body from shearing forces during rotation. The protein is Flagellar L-ring protein of Pseudomonas fluorescens (strain Pf0-1).